A 491-amino-acid chain; its full sequence is MDHTDNELQGTNSSGSLGGLDVRRRIPIKLISKQASKVKPAPRTQRTVSRMPAKAPQGDEEGFDYNEEQRYDCKGGELFGNQRRFPGHLFWDFKINILGEKDDTPVHFCDKCGLPIKVYGRMIPCKHVFCYDCAILHEKKGDKMCPGCSDPVQRIEQCTRGSLFMCSIVQGCKRTYLSQRDLQAHINHRHMRAGKPVTRASLENVHPPIAPPPTDIPDRFIMPPDKHHMSHIPPKQHIMMPPPPLQHVPHEHYNQPHEDIRAPPAELSMAPPPPRSVSQETFRISTRKHSNLITVPIQDDSSSGAREPPPPAPAPAHHHPEYQGQPVVSHPHHIMPPQQHYAPPPPPPPPISHPMPHPPQAAGTPHLVYSQAPPPPMTSAPPPITPPPGHIIAQMPPYMNHPPPGPPPPQHGGPPVTAPPPHHYNPNSLPQFTEDQGTLSPPFTQPGGMSPGIWPAPRGPPPPPRMQGPPSQTPLPGPHHPDQTRYRPYYQ.

Disordered regions lie at residues 1 to 20 and 33 to 61; these read MDHTDNELQGTNSSGSLGGL and KQASKVKPAPRTQRTVSRMPAKAPQGDEE. Residues 109-149 form an RING-type zinc finger; that stretch reads CDKCGLPIKVYGRMIPCKHVFCYDCAILHEKKGDKMCPGCS. The tract at residues 148–206 is HYB domain; that stretch reads CSDPVQRIEQCTRGSLFMCSIVQGCKRTYLSQRDLQAHINHRHMRAGKPVTRASLENVH. The C2H2-type zinc finger occupies 164 to 190; the sequence is FMCSIVQGCKRTYLSQRDLQAHINHRH. Phosphoserine is present on residues Ser-201, Ser-285, and Ser-290. The disordered stretch occupies residues 255-491; the sequence is QPHEDIRAPP…DQTRYRPYYQ (237 aa). 3 stretches are compositionally biased toward pro residues: residues 342–359, 372–389, and 399–423; these read APPPPPPPPISHPMPHPP, APPPPMTSAPPPITPPPG, and MNHPPPGPPPPQHGGPPVTAPPPHH. Residues 427 to 442 are compositionally biased toward polar residues; that stretch reads NSLPQFTEDQGTLSPP. Pro residues predominate over residues 457-478; it reads PRGPPPPPRMQGPPSQTPLPGP.

It belongs to the Hakai family. Homodimer. Interacts with tyrosine-phosphorylated SRC substrates. Component of the WMM complex, a N6-methyltransferase complex composed of a catalytic subcomplex, named MAC, and of an associated subcomplex, named MACOM. The MAC subcomplex is composed of METTL3 and METTL14. The MACOM subcomplex is composed of WTAP, ZC3H13, CBLL1/HAKAI, VIRMA, and, in some cases of RBM15 (RBM15 or RBM15B). Also a component of a MACOM-like complex, named WTAP complex, composed of WTAP, ZC3H13, CBLL1, VIRMA, RBM15, BCLAF1 and THRAP3. Post-translationally, phosphorylated on tyrosine residues. Detected in heart, brain, spleen, lung, liver, skeletal muscle, kidney and testis.

The protein resides in the nucleus speckle. The protein localises to the nucleus. It localises to the nucleoplasm. It is found in the cytoplasm. The enzyme catalyses S-ubiquitinyl-[E2 ubiquitin-conjugating enzyme]-L-cysteine + [acceptor protein]-L-lysine = [E2 ubiquitin-conjugating enzyme]-L-cysteine + N(6)-ubiquitinyl-[acceptor protein]-L-lysine.. The protein operates within protein modification; protein ubiquitination. Functionally, E3 ubiquitin-protein ligase that mediates ubiquitination of several tyrosine-phosphorylated Src substrates, including CDH1, CTTN and DOK1. Targets CDH1 for endocytosis and degradation. Associated component of the WMM complex, a complex that mediates N6-methyladenosine (m6A) methylation of RNAs, a modification that plays a role in the efficiency of mRNA splicing and RNA processing. Its function in the WMM complex is unknown. The polypeptide is E3 ubiquitin-protein ligase Hakai (Mus musculus (Mouse)).